Here is a 424-residue protein sequence, read N- to C-terminus: MLDLKFILNNKNEVIKKLSTRNYDLANITKINNLGEMRSKLIFELEKLQAKRNKLSDEIGIKKRNNENCDSLIEEVNAIKAQIEKVDHEADDIISQVNDILTKIPNLPYDDVPVGSDELDNKVIKEHASLGRGLVKGVEAHYDIATKLDIIDFTRAVKLAQTRFVLYKNAGAKLIRALANFMLDTHINNGYKEIMPAHLVNSKMLFGTGQLPKFKDDLFRVSDSDLWLIPTAEVPLTNYHYDEILNLNEPIKYVAYTKCFRSEAGSGGRDTRGIIRQHEFHKVELVKIVRQEDAMGEWEKMVNDAKNILTLLELPYREILLCTGDMGFSSAKTIDLEIWIPSEQRYRETSSISICKDFQARRAKIRYKDADGKTKYAFTMNGSGVAIDRVMAAILENYQNSDGTITVPKVLVPYMNGITKIEAK.

231-233 lines the L-serine pocket; sequence TAE. 261–263 is an ATP binding site; the sequence is RSE. Glutamate 284 is a binding site for L-serine. Residue 348 to 351 participates in ATP binding; the sequence is ETSS. Serine 383 contributes to the L-serine binding site.

Belongs to the class-II aminoacyl-tRNA synthetase family. Type-1 seryl-tRNA synthetase subfamily. In terms of assembly, homodimer. The tRNA molecule binds across the dimer.

The protein resides in the cytoplasm. It catalyses the reaction tRNA(Ser) + L-serine + ATP = L-seryl-tRNA(Ser) + AMP + diphosphate + H(+). It carries out the reaction tRNA(Sec) + L-serine + ATP = L-seryl-tRNA(Sec) + AMP + diphosphate + H(+). It functions in the pathway aminoacyl-tRNA biosynthesis; selenocysteinyl-tRNA(Sec) biosynthesis; L-seryl-tRNA(Sec) from L-serine and tRNA(Sec): step 1/1. Catalyzes the attachment of serine to tRNA(Ser). Is also able to aminoacylate tRNA(Sec) with serine, to form the misacylated tRNA L-seryl-tRNA(Sec), which will be further converted into selenocysteinyl-tRNA(Sec). This Metamycoplasma arthritidis (strain 158L3-1) (Mycoplasma arthritidis) protein is Serine--tRNA ligase.